The following is a 180-amino-acid chain: Putative methyltransferase YrhH (180 aa).

It belongs to the methyltransferase superfamily.

The chain is Putative methyltransferase YrhH (yrhH) from Bacillus subtilis (strain 168).